The primary structure comprises 358 residues: MLYHLLYPLAADFRIFNVFKYLTFRTIYAVITALVVSFILGPWVIRKLEALQARQVIRTDGPESHLKKSGTPTMGGILILASIVIPTLLWADLTNRYVWTTLFVILGYGLIGFTDDYKKVVEKDTKGLSPRQKMFWQMLIAGGAVCFLVLVAGMSTELSVPFFKRLHPDLSYLYIPFGMLVVVGASNAVNLTDGLDGLAIGPVAINAATFLLFAYIAGNAKLSSYLQTPYVPGAGELAVLCGAMVGAGIGFLWYNAYPAEVFMGDVGSLSLGGGLGILAVITKQEMLLVIVGGIFVVEALSVIFQVGSYKYRGKRIFRMAPIHHHFELKGVAEPKIIVRFWIITIILALVAISTLKLR.

The next 10 helical transmembrane spans lie at 25–45 (RTIY…PWVI), 73–93 (TMGG…WADL), 97–117 (YVWT…TDDY), 134–154 (MFWQ…VAGM), 172–192 (YLYI…VNLT), 197–217 (GLAI…AYIA), 233–253 (GAGE…GFLW), 261–281 (VFMG…LAVI), 286–306 (MLLV…IFQV), and 335–355 (KIIV…ISTL).

Belongs to the glycosyltransferase 4 family. MraY subfamily. Mg(2+) serves as cofactor.

The protein localises to the cell inner membrane. It carries out the reaction UDP-N-acetyl-alpha-D-muramoyl-L-alanyl-gamma-D-glutamyl-meso-2,6-diaminopimeloyl-D-alanyl-D-alanine + di-trans,octa-cis-undecaprenyl phosphate = di-trans,octa-cis-undecaprenyl diphospho-N-acetyl-alpha-D-muramoyl-L-alanyl-D-glutamyl-meso-2,6-diaminopimeloyl-D-alanyl-D-alanine + UMP. It functions in the pathway cell wall biogenesis; peptidoglycan biosynthesis. In terms of biological role, catalyzes the initial step of the lipid cycle reactions in the biosynthesis of the cell wall peptidoglycan: transfers peptidoglycan precursor phospho-MurNAc-pentapeptide from UDP-MurNAc-pentapeptide onto the lipid carrier undecaprenyl phosphate, yielding undecaprenyl-pyrophosphoryl-MurNAc-pentapeptide, known as lipid I. In Geobacter sulfurreducens (strain ATCC 51573 / DSM 12127 / PCA), this protein is Phospho-N-acetylmuramoyl-pentapeptide-transferase.